The following is a 788-amino-acid chain: Endonuclease MutS2 (788 aa).

Glycine 332–threonine 339 contacts ATP. The Smr domain maps to valine 713–lysine 788.

It belongs to the DNA mismatch repair MutS family. MutS2 subfamily. As to quaternary structure, homodimer. Binds to stalled ribosomes, contacting rRNA.

Functionally, endonuclease that is involved in the suppression of homologous recombination and thus may have a key role in the control of bacterial genetic diversity. Acts as a ribosome collision sensor, splitting the ribosome into its 2 subunits. Detects stalled/collided 70S ribosomes which it binds and splits by an ATP-hydrolysis driven conformational change. Acts upstream of the ribosome quality control system (RQC), a ribosome-associated complex that mediates the extraction of incompletely synthesized nascent chains from stalled ribosomes and their subsequent degradation. Probably generates substrates for RQC. The polypeptide is Endonuclease MutS2 (Clostridium botulinum (strain Kyoto / Type A2)).